The primary structure comprises 493 residues: (+)-menthofuran synthase (493 aa).

Residue M1 is a topological domain, cytoplasmic. A helical; Signal-anchor for type II membrane protein transmembrane segment spans residues 2–19 (AALLVFFSVSLILLAVLF). The Lumenal segment spans residues 20–493 (HKRKSSLSSR…LLVLATPRQS (474 aa)). N-linked (GlcNAc...) asparagine glycosylation is present at N169. A heme-binding site is contributed by C434.

The protein belongs to the cytochrome P450 family. It depends on heme as a cofactor.

It is found in the membrane. It carries out the reaction (R)-pulegone + reduced [NADPH--hemoprotein reductase] + O2 = (R)-menthofuran + oxidized [NADPH--hemoprotein reductase] + 2 H2O + H(+). Its pathway is secondary metabolite biosynthesis; terpenoid biosynthesis. In terms of biological role, monoterpene synthase that catalyzes the formation of (+)-menthofuran from (+)-pulegone. The sequence is that of (+)-menthofuran synthase from Mentha piperita (Peppermint).